Consider the following 207-residue polypeptide: Outer-membrane lipoprotein LolB (207 aa).

An N-terminal signal peptide occupies residues 1–21 (MPIRKVSLLRLIPLASLVLAA). The N-palmitoyl cysteine moiety is linked to residue Cys-22. Residue Cys-22 is the site of S-diacylglycerol cysteine attachment.

Belongs to the LolB family. In terms of assembly, monomer.

It is found in the cell outer membrane. Functionally, plays a critical role in the incorporation of lipoproteins in the outer membrane after they are released by the LolA protein. The protein is Outer-membrane lipoprotein LolB of Serratia proteamaculans (strain 568).